The primary structure comprises 77 residues: Cell division topological specificity factor (77 aa).

This sequence belongs to the MinE family.

Prevents the cell division inhibition by proteins MinC and MinD at internal division sites while permitting inhibition at polar sites. This ensures cell division at the proper site by restricting the formation of a division septum at the midpoint of the long axis of the cell. This Helicobacter acinonychis (strain Sheeba) protein is Cell division topological specificity factor.